The chain runs to 80 residues: Acyl carrier protein (80 aa).

In terms of domain architecture, Carrier spans 1 to 76 (MTLEEKIIEI…DVIDYLKVRN (76 aa)). Serine 36 is subject to O-(pantetheine 4'-phosphoryl)serine.

It belongs to the acyl carrier protein (ACP) family. 4'-phosphopantetheine is transferred from CoA to a specific serine of apo-ACP by AcpS. This modification is essential for activity because fatty acids are bound in thioester linkage to the sulfhydryl of the prosthetic group.

The protein localises to the cytoplasm. It functions in the pathway lipid metabolism; fatty acid biosynthesis. Its function is as follows. Carrier of the growing fatty acid chain in fatty acid biosynthesis. This Syntrophus aciditrophicus (strain SB) protein is Acyl carrier protein.